The chain runs to 300 residues: Protein CANDIDATE G-PROTEIN COUPLED RECEPTOR 2 (300 aa).

Transmembrane regions (helical) follow at residues 37 to 57, 73 to 93, 110 to 130, 152 to 172, 183 to 203, 222 to 242, and 245 to 265; these read GFLHNTVLVLASILFVAYLAY, IMIAYYGFLWLVSLLNLAWCC, LTLFTTSGMLFLEVSLVAFLF, IGLDLLLKAIYLFGFGVPLFI, WGLWVIHKLLLAGIYGMIFFM, ITVMLALNGLSLFACALTANG, and FGLWLYGITSVCYHAFYLPLL.

Belongs to the UPF0359 family. Interacts with GPA1. In terms of tissue distribution, expressed at low levels in seedlings.

Its subcellular location is the cell membrane. Its function is as follows. Plays a role in plants and microbes interactions. G-protein coupled melatonin receptor involved in root growth mediated by the bacterial quorum-sensing signals N-acyl-homoserine lactones (AHLs). Binds to melatonin. Phytomelatonin receptor required, in collaboration with GPA1, for melatonin-mediated stomatal closure involving H(2)O(2) and Ca(2+) signals. Essential for melatonin-mediated plant response to osmotic stress probably by activating reactive oxygen species (ROS) scavenging ability. The sequence is that of Protein CANDIDATE G-PROTEIN COUPLED RECEPTOR 2 from Arabidopsis thaliana (Mouse-ear cress).